The sequence spans 320 residues: Stress-involved WYL domain-containing regulator (320 aa).

Positions 7–65 (TTGRVVQLLGLLQSRRVWTGEELAERLGVTGRSVRRDIERLRELGYPVHASKGQGGGYQ) constitute an HTH deoR-type domain. The H-T-H motif DNA-binding region spans 24-43 (WTGEELAERLGVTGRSVRRD). A WYL domain is found at 139–218 (DTAVAPDVLM…SDVRATGTTF (80 aa)). Positions 245–320 (VRYFAPEKVV…MADRLRRAVR (76 aa)) are WCX domain.

Homodimer.

Transcriptional activator. Acts as a transcriptional activator of the MSMEG_1357-56 operon upon genotoxic stress. Controls adjacent genes that belong to the DinB/YfiT-like putative metalloenzymes superfamily by upregulating their expression in response to various genotoxic stress conditions, including exposure to H(2)O(2) or the natural antibiotic zeocin, as well as mitomycin C (MMC), diamide and UVC radiation. Upon genotoxic stress, upregulates two genes encoding proteins of the DinB/YfiT-like putative metalloenzymes superfamily, MSMEG_1357 and MSMEG_1356. Binds different forms of single-stranded DNA (ssDNA) with high affinity, primarily through its characteristic WYL domain. Binds nucleic acids with single-stranded regions, such as polyT 20mer ssDNA, 5' tailed, 3' tailed and fork DNA, but not ssRNA. The chain is Stress-involved WYL domain-containing regulator from Mycolicibacterium smegmatis (strain ATCC 700084 / mc(2)155) (Mycobacterium smegmatis).